A 528-amino-acid chain; its full sequence is Phosphoenolpyruvate carboxykinase (ATP) (528 aa).

Residues Arg54, Tyr190, and Lys196 each contribute to the substrate site. ATP-binding positions include Lys196, His215, and 231–239 (GLSGTGKTT). Residues Lys196 and His215 each contribute to the Mn(2+) site. Asp252 serves as a coordination point for Mn(2+). 3 residues coordinate ATP: Glu280, Arg316, and Thr441. Residue Arg316 coordinates substrate.

This sequence belongs to the phosphoenolpyruvate carboxykinase (ATP) family. Requires Mn(2+) as cofactor.

Its subcellular location is the cytoplasm. It catalyses the reaction oxaloacetate + ATP = phosphoenolpyruvate + ADP + CO2. Its pathway is carbohydrate biosynthesis; gluconeogenesis. Functionally, involved in the gluconeogenesis. Catalyzes the conversion of oxaloacetate (OAA) to phosphoenolpyruvate (PEP) through direct phosphoryl transfer between the nucleoside triphosphate and OAA. This chain is Phosphoenolpyruvate carboxykinase (ATP), found in Sulfurimonas denitrificans (strain ATCC 33889 / DSM 1251) (Thiomicrospira denitrificans (strain ATCC 33889 / DSM 1251)).